An 843-amino-acid polypeptide reads, in one-letter code: Probable cleavage and polyadenylation specificity factor subunit 2 (843 aa).

Positions 414–425 (AEETRLRMERAR) are enriched in basic and acidic residues. Disordered regions lie at residues 414 to 443 (AEET…DIAA) and 691 to 753 (DKNR…TKGK). The segment covering 432-441 (ESDDSDDDDI) has biased composition (acidic residues). Positions 732–746 (SGKEVENGHTNDSRT) are enriched in basic and acidic residues.

It belongs to the metallo-beta-lactamase superfamily. RNA-metabolizing metallo-beta-lactamase-like family. CPSF2/YSH1 subfamily. CPSF is a heterotetramer composed of four distinct subunits 160, 100, 70 and 30 kDa.

The protein localises to the nucleus. CPSF plays a key role in pre-mRNA 3'-end formation, recognizing the AAUAAA signal sequence and interacting with poly(A)polymerase and other factors to bring about cleavage and poly(A) addition. The protein is Probable cleavage and polyadenylation specificity factor subunit 2 (cpsf-2) of Caenorhabditis elegans.